The primary structure comprises 1706 residues: Bifunctional hemolysin/adenylate cyclase (1706 aa).

The interval 1–399 is a, catalytic; sequence MQQSHQAGYA…RRPSLGAVER (399 aa). Position 349-356 (349-356) interacts with ATP; it reads AYGVAGKS. Positions 383–405 are disordered; sequence VPASPGLRRPSLGAVERQDSGYD. Residues 400 to 912 form a b, Ala/Gly-rich region; it reads QDSGYDSLDG…LKHSIKLDVI (513 aa). The interval 500–698 is required for interaction with CyaC; it reads LSAAVFGLGE…SVVGAPVAVV (199 aa). Residues K860 and K983 are each lipidated (N6-palmitoyl lysine). Positions 913–1656 are c; that stretch reads GGDGDDVVLA…RDADHRVEII (744 aa). Hemolysin-type calcium-binding repeat units lie at residues 1014–1031, 1032–1049, 1050–1067, 1155–1172, 1173–1190, 1279–1296, 1297–1314, 1315–1332, 1335–1352, 1411–1428, 1429–1446, 1447–1464, 1468–1484, 1537–1554, 1555–1572, 1573–1590, and 1603–1620; these read IGGAGNDSITGNAHDNFL, AGGSGDDRLDGGAGNDTL, VGGEGQNTVIGGAGDDVF, WGHDGNDTIRGRGGDDIL, RGGLGLDTLYGEDGNDIF, MGQGGDDTVRGGDGDDLL, FGGDGNDMLYGDAGNDTL, YGGLGDDTLEGGAGNDWF, TQAREHDVLRGGDGVDTV, TGDAQANVLRGAGGADVL, AGGEGDDVLLGGDGDDQL, SGDAGRDRLYGEAGDDWF, AANAGNLLDGGDGRDTV, IGDAGANVLNGLAGNDVL, SGGAGDDVLLGDEGSDLL, SGDAGNDDLFGGQGDDTY, and ESGGGHDTIRINAGADQL. The tract at residues 1657–1706 is d, Asp/Gly-rich; that stretch reads HAANQAVDQAGIEKLVEAMAQYPDPGAAAAAPPAARVPDTLMQSLAVNWR.

In the N-terminal section; belongs to the adenylyl cyclase class-2 family. It in the C-terminal section; belongs to the RTX prokaryotic toxin family. Post-translationally, released in a processed form. In terms of processing, palmitoylated at Lys-860 and Lys-983 by CyaC. The toxin only becomes active when modified in position Lys-983: palmitoylation is required for efficient membrane insertion and pore formation of the acylated Hemolysin chain.

It is found in the secreted. It localises to the host cell membrane. It catalyses the reaction ATP = 3',5'-cyclic AMP + diphosphate. Its activity is regulated as follows. Activated by host calmodulin. In terms of biological role, bifunctional adenylate cyclase toxin-hemolysin that plays a crucial role in host colonization. It causes whooping cough by acting on mammalian cells by elevating cAMP-concentration and thus disrupts normal cell function. Its function is as follows. Adenylate cyclase that is activated by host intracellular calmodulin and catalyzes un-regulated conversion of ATP to cAMP, thereby impairing microbicidal functions of immune effector cells and inducing apoptosis of lung macrophages. Hemolysin that forms small cation-selective membrane channels, leading to hemolytic activity. The hemolytic activity of CyaA is weak compared with that of the HlyA of E.coli. The polypeptide is Bifunctional hemolysin/adenylate cyclase (cya) (Bordetella pertussis (strain Tohama I / ATCC BAA-589 / NCTC 13251)).